Here is a 709-residue protein sequence, read N- to C-terminus: Solute carrier family 15 member 1 (709 aa).

A helical membrane pass occupies residues 1–21 (MGMSKSRGCFGYPLSIFFIVV). Residues 22–53 (NEFCERFSYYGMRALLVLYFRNFLGWDDNLST) are Extracellular-facing. N-linked (GlcNAc...) asparagine glycosylation occurs at Asn-50. Residues 54 to 74 (AIYHTFVALCYLTPILGALIA) traverse the membrane as a helical segment. Over 75 to 82 (DSWLGKFK) the chain is Cytoplasmic. Residues 83–103 (TIVSLSIVYTIGQAVISVSSI) form a helical membrane-spanning segment. The Extracellular segment spans residues 104–118 (NDLTDHDHNGSPDSL). Residues 119–139 (PVHVALSMVGLALIALGTGGI) form a helical membrane-spanning segment. Over 140–161 (KPCVSAFGGDQFEEGQEKQRNR) the chain is Cytoplasmic. A helical transmembrane segment spans residues 162-182 (FFSIFYLAINGGSLLSTIITP). Topologically, residues 183 to 198 (ILRVQQCGIHSQQACY) are extracellular. A helical membrane pass occupies residues 199–219 (PLAFGVPAALMAVALIVFVLG). Residues 220–276 (SGMYKKFQPQGNIMGKVAKCIGFAIKNRFRHRSKAYPKREHWLDWAKEKYDERLISQ) lie on the Cytoplasmic side of the membrane. A helical membrane pass occupies residues 277–297 (IKMVTKVMFLYIPLPMFWALF). At 298–327 (DQQGSRWTLQATTMNGKIGAIEIQPDQMQT) the chain is on the extracellular side. The chain crosses the membrane as a helical span at residues 328-348 (VNAILIVIMVPIVDAVVYPLI). Over 349-361 (AKCGFNFTSLKKM) the chain is Cytoplasmic. The helical transmembrane segment at 362–382 (TVGMFLASMAFVVAAIVQVEI) threads the bilayer. Residues 383–585 (DKTLPVFPGG…PPNTVNMALQ (203 aa)) are Extracellular-facing. Residues 383–585 (DKTLPVFPGG…PPNTVNMALQ (203 aa)) form an extracellular domain (ECD) region. N-linked (GlcNAc...) asparagine glycans are attached at residues Asn-406, Asn-439, Asn-515, and Asn-532. A helical membrane pass occupies residues 586–606 (IPQYFLLTCGEVVFSVTGLEF). The Cytoplasmic portion of the chain corresponds to 607–620 (SYSQAPSNMKSVLQ). A helical transmembrane segment spans residues 621–641 (AGWLLTVAVGNIIVLIVAGAG). Over 642–646 (HFPKQ) the chain is Extracellular. Residues 647–667 (WAEYILFASLLLVVCVIFAIM) traverse the membrane as a helical segment. The Cytoplasmic portion of the chain corresponds to 668–709 (ARFYTYINPAEIEAQFDEDEKKKGIGKENPYSSLEPVSQTNM). The disordered stretch occupies residues 690–709 (KGIGKENPYSSLEPVSQTNM). A compositionally biased stretch (polar residues) spans 697–709 (PYSSLEPVSQTNM).

Belongs to the major facilitator superfamily. Proton-dependent oligopeptide transporter (POT/PTR) (TC 2.A.17) family. Interacts (via extracellular domain region) with trypsin.

The protein resides in the apical cell membrane. The catalysed reaction is a dipeptide(out) + H(+)(out) = a dipeptide(in) + H(+)(in). It catalyses the reaction an L-amino acid tripeptide(out) + H(+)(out) = an L-amino acid tripeptide(in) + H(+)(in). The enzyme catalyses L-alanyl-L-lysine(out) + H(+)(out) = L-alanyl-L-lysine(in) + H(+)(in). It carries out the reaction L-alanyl-L-proline(out) + H(+)(out) = L-alanyl-L-proline(in) + H(+)(in). The catalysed reaction is L-alanyl-L-valine(out) + H(+)(out) = L-alanyl-L-valine(in) + H(+)(in). It catalyses the reaction carnosine(out) + H(+)(out) = carnosine(in) + H(+)(in). The enzyme catalyses glycyl-L-glutamine(out) + H(+)(out) = glycyl-L-glutamine(in) + H(+)(in). It carries out the reaction glycyl-L-leucine(out) + H(+)(out) = glycyl-L-leucine(in) + H(+)(in). The catalysed reaction is glycyl-L-proline(out) + H(+)(out) = glycyl-L-proline(in) + H(+)(in). It catalyses the reaction glycyl-sarcosine(out) + H(+)(out) = glycyl-sarcosine(in) + H(+)(in). The enzyme catalyses L-leucyl-L-leucine(out) + H(+)(out) = L-leucyl-L-leucine(in) + H(+)(in). It carries out the reaction L-leucyl-L-proline(out) + H(+)(out) = L-leucyl-L-proline(in) + H(+)(in). The catalysed reaction is L-phenylalanyl-L-leucine(out) + H(+)(out) = L-phenylalanyl-L-leucine(in) + H(+)(in). It catalyses the reaction L-phenylalanyl-L-phenylalanine(out) + H(+)(out) = L-phenylalanyl-L-phenylalanine(in) + H(+)(in). The enzyme catalyses L-lysyl-glycine(out) + H(+)(out) = L-lysyl-glycine(in) + H(+)(in). It carries out the reaction L-tyrosylglycine(out) + H(+)(out) = L-tyrosylglycine(in) + H(+)(in). The catalysed reaction is L-alanyl-L-aspartate(out) + 2 H(+)(out) = L-alanyl-L-aspartate(in) + 2 H(+)(in). It catalyses the reaction L-aspartyl-glycine(out) + 2 H(+)(out) = L-aspartyl-glycine(in) + 2 H(+)(in). The enzyme catalyses glycyl-L-aspartate(out) + 2 H(+)(out) = glycyl-L-aspartate(in) + 2 H(+)(in). It carries out the reaction glycyl-L-glutamate(out) + 2 H(+)(out) = glycyl-L-glutamate(in) + 2 H(+)(in). The catalysed reaction is L-alanyl-L-leucyl-L-alanine(out) + H(+)(out) = L-alanyl-L-leucyl-L-alanine(in) + H(+)(in). It catalyses the reaction L-alanyl-L-prolylglycine(out) + H(+)(out) = L-alanyl-L-prolylglycine(in) + H(+)(in). The enzyme catalyses glycylglycyl-L-isoleucine(out) + H(+)(out) = glycylglycyl-L-isoleucine(in) + H(+)(in). It carries out the reaction glycylglycyl-L-proline(out) + H(+)(out) = glycylglycyl-L-proline(in) + H(+)(in). The catalysed reaction is L-methionyl-L-phenylalanyl-L-methionine(out) + H(+)(out) = L-methionyl-L-phenylalanyl-L-methionine(in) + H(+)(in). It catalyses the reaction N-acetyl-D-muramoyl-L-alanyl-D-isoglutamine(out) + 2 H(+)(out) = N-acetyl-D-muramoyl-L-alanyl-D-isoglutamine(in) + 2 H(+)(in). The enzyme catalyses N(alpha)-formyl-L-methionyl-L-leucyl-L-phenylalanine(out) + 2 H(+)(out) = N(alpha)-formyl-L-methionyl-L-leucyl-L-phenylalanine(in) + 2 H(+)(in). In terms of biological role, electrogenic proton-coupled amino-acid transporter that transports oligopeptides of 2 to 4 amino acids with a preference for dipeptides. Transports neutral and monovalently charged peptides with a proton to peptide stoichiometry of 1:1 or 2:1. Primarily responsible for the absorption of dietary di- and tripeptides from the small intestinal lumen. Mediates transepithelial transport of muramyl and N-formylated bacterial dipeptides contributing to recognition of pathogenic bacteria by the mucosal immune system. The polypeptide is Solute carrier family 15 member 1 (Mus musculus (Mouse)).